Consider the following 100-residue polypeptide: Urease subunit gamma (100 aa).

It belongs to the urease gamma subunit family. Heterotrimer of UreA (gamma), UreB (beta) and UreC (alpha) subunits. Three heterotrimers associate to form the active enzyme.

The protein resides in the cytoplasm. It carries out the reaction urea + 2 H2O + H(+) = hydrogencarbonate + 2 NH4(+). It participates in nitrogen metabolism; urea degradation; CO(2) and NH(3) from urea (urease route): step 1/1. The sequence is that of Urease subunit gamma from Arthrobacter sp. (strain FB24).